The following is a 222-amino-acid chain: Chromatin-associated protein SWI6 (222 aa).

Positions 1–15 (MPVIKKEELSQKKDL) are enriched in basic and acidic residues. 2 disordered regions span residues 1-26 (MPVI…GLED) and 77-147 (ETQD…DRQY). The span at 16-26 (ESEEEDSGLED) shows a compositional bias: acidic residues. Residues 28-87 (YEVEKVIKHRGKGKNIEFLVRWKGYGPEYDTWEPTENVASAEEAVAAYWETQDKTATAPR) enclose the Chromo domain.

In terms of assembly, interacts with DMT5.

The protein localises to the nucleus. In terms of biological role, recognizes and binds histone H3 tails methylated at 'Lys-9', leading to epigenetic repression. Localizes DMT5 to heterochromatin characterized by trimethylation of histone H3 tails at 'Lys-9'. The chain is Chromatin-associated protein SWI6 from Cryptococcus neoformans var. grubii serotype A (strain H99 / ATCC 208821 / CBS 10515 / FGSC 9487) (Filobasidiella neoformans var. grubii).